The primary structure comprises 466 residues: Protein tilB homolog (466 aa).

LRR repeat units lie at residues 22-43 (SLEELSLHQQEIERLEHIDKWC), 45-66 (DLKILYLQNNLIGKIENVSKLK), 67-88 (KLEYLNLALNNIEKIENLEGCE), and 89-110 (ELAKLDLTVNFIGELSSIKTLK). Residues 123-161 (NPCAFFDHYREFVVATLPQLKWLDGKGIEPSERIKALQE) enclose the LRRCT domain. Residues 178-204 (LKRAKLKEEAQRKHQEEDKNEDKRSNA) are a coiled coil. Composition is skewed to basic and acidic residues over residues 185-202 (EEAQRKHQEEDKNEDKRS) and 269-279 (EKQRKNQEKLS). 2 disordered regions span residues 185 to 206 (EEAQRKHQEEDKNEDKRSNAGF) and 269 to 288 (EKQRKNQEKLSERKKKVKPP). One can recognise a CS domain in the interval 301-396 (VNEPKIDFSL…GGQRAFTSVK (96 aa)). Positions 418-466 (VDPSKHSFPDVTNIVQGKKHTPRRRPEPKIIPSEEDPTFEDNPEVPPLI) are disordered. The span at 450-460 (SEEDPTFEDNP) shows a compositional bias: acidic residues.

It belongs to the tilB family. As to quaternary structure, interacts (via CS domain) with ZMYND10 (via C-terminus).

The protein localises to the cytoplasm. Its subcellular location is the cell projection. It is found in the cilium. Functionally, may play a role in dynein arm assembly, hence essential for proper axoneme building for cilia motility. The chain is Protein tilB homolog (LRCC6) from Macaca fascicularis (Crab-eating macaque).